Here is a 133-residue protein sequence, read N- to C-terminus: Chromosome transmission fidelity protein 8 (133 aa).

Belongs to the CTF8 family. Component of the CTF18-RFC complex, which consists of CTF18, CTF8, DSCC1, RFC2, RFC3, RFC4 and RFC5.

Its subcellular location is the nucleus. Essential for the fidelity of chromosome transmission. Required for the DNA replication block checkpoint. Component of the RFC-like complex CTF18-RFC which is required for efficient establishment of chromosome cohesion during S-phase and may load or unload POL30/PCNA. During a clamp loading circle, the RFC:clamp complex binds to DNA and the recognition of the double-stranded/single-stranded junction stimulates ATP hydrolysis by RFC. The complex presumably provides bipartite ATP sites in which one subunit supplies a catalytic site for hydrolysis of ATP bound to the neighboring subunit. Dissociation of RFC from the clamp leaves the clamp encircling DNA. The chain is Chromosome transmission fidelity protein 8 (CTF8) from Saccharomyces cerevisiae (strain ATCC 204508 / S288c) (Baker's yeast).